The chain runs to 173 residues: Calmodulin-like protein 11 (173 aa).

The segment covering 1-26 (MEEIQQQQQQQQQQQQQQQQQQQQQQ) has biased composition (low complexity). Residues 1–27 (MEEIQQQQQQQQQQQQQQQQQQQQQQE) are disordered. EF-hand domains lie at 31 to 66 (EQIMEFKEAFCLFDKDGDGCITADELATVIRSLDQN), 67 to 102 (PTEQELQDMITEIDSDGNGTIEFSEFLNLMANQLQE), 104 to 139 (DADEELKEAFKVFDKDQNGYISASELRHVMINLGEK), and 140 to 173 (LTDEEVDQMIKEADLDGDGQVNYDEFVRMMMING). Ca(2+) contacts are provided by Asp44, Asp46, Asp48, Cys50, Glu55, Asp80, Asp82, Asn84, Thr86, Glu91, Asp117, Asp119, Asn121, Tyr123, Glu128, Asp153, Asp155, Asp157, Gln159, and Glu164.

This sequence belongs to the calmodulin family.

Potential calcium sensor. In Arabidopsis thaliana (Mouse-ear cress), this protein is Calmodulin-like protein 11 (CML11).